Here is a 194-residue protein sequence, read N- to C-terminus: uncharacterized protein (194 aa).

A signal peptide spans 1-24 (MRKFVAFFVIVALAALLAGCGGQG).

This is an uncharacterized protein from Archaeoglobus fulgidus (strain ATCC 49558 / DSM 4304 / JCM 9628 / NBRC 100126 / VC-16).